The following is a 961-amino-acid chain: Mitogen-activated protein kinase kinase kinase 13-A (961 aa).

The disordered stretch occupies residues 88-118 (LRDQDEPENTAPQGSSHSGDGGSYSGNEDIR). Residues 169–410 (ISELQWLGSG…FRQILMHLDI (242 aa)) enclose the Protein kinase domain. Residues 175–183 (LGSGAQGAV) and Lys196 each bind ATP. Catalysis depends on Asp280, which acts as the Proton acceptor. Leucine-zipper stretches follow at residues 434–455 (VKKHFEKIKSEGTCIHRLDEEL) and 487–508 (LSAIMLQLEVREKELIRREQAV). Residues 458–497 (RRREELRHALDIREHYERKLERANNLYMELSAIMLQLEVR) are a coiled coil. Disordered regions lie at residues 513–600 (PGTY…SKGS), 615–637 (ALSQQSSQHQTLASPPVTSCSPY), and 799–883 (RRIR…KLDD). Residues 560–578 (SAEGSAASASPISGSPKTS) show a composition bias toward low complexity. Positions 584-596 (NRYRSKPRHRRVN) are enriched in basic residues. Residues 810 to 823 (ESSEEEEGEVDSEV) show a composition bias toward acidic residues. The acidic stretch occupies residues 811 to 824 (SSEEEEGEVDSEVE). Polar residues predominate over residues 837–851 (KCQSYSTFSSENFSV).

The protein belongs to the protein kinase superfamily. Ser/Thr protein kinase family.

The protein resides in the cytoplasm. It localises to the membrane. It carries out the reaction L-seryl-[protein] + ATP = O-phospho-L-seryl-[protein] + ADP + H(+). It catalyses the reaction L-threonyl-[protein] + ATP = O-phospho-L-threonyl-[protein] + ADP + H(+). Functionally, may have a role in the JNK signaling pathway. The sequence is that of Mitogen-activated protein kinase kinase kinase 13-A (map3k13-a) from Xenopus laevis (African clawed frog).